A 315-amino-acid polypeptide reads, in one-letter code: Ribosomal RNA small subunit methyltransferase H (315 aa).

S-adenosyl-L-methionine-binding positions include 37 to 39 (GGH), Asp57, Phe83, Asp105, and Gln112.

The protein belongs to the methyltransferase superfamily. RsmH family.

It localises to the cytoplasm. The catalysed reaction is cytidine(1402) in 16S rRNA + S-adenosyl-L-methionine = N(4)-methylcytidine(1402) in 16S rRNA + S-adenosyl-L-homocysteine + H(+). Functionally, specifically methylates the N4 position of cytidine in position 1402 (C1402) of 16S rRNA. This Pseudomonas fluorescens (strain ATCC BAA-477 / NRRL B-23932 / Pf-5) protein is Ribosomal RNA small subunit methyltransferase H.